A 530-amino-acid chain; its full sequence is PTS system maltose-specific EIICB component (530 aa).

The PTS EIIC type-1 domain maps to 1–431; sequence MTAKTAPKVT…FNLKTPGRDS (431 aa). 10 helical membrane-spanning segments follow: residues 22–42, 69–89, 96–116, 138–158, 189–209, 289–309, 321–341, 343–363, 369–389, and 399–419; these read FMLPVALLSFCGIMLGIGSSL, IGSFAFSFLPVMFCIAIPLGL, VAAFAGFIGYAVMNLAVNFWL, ILGIQSIDTGILGAVIAGIIV, LVMGLVGLVIPLVWPIFAMGI, FLSQGKMPAFLGGLPGAALAM, IKGLLISGLIACVVGGTTEPL, FLFLFVAPVLYVIHALLTGLG, VLGVTIGNTDGNIIDFVVFGI, and MVPVVAAIWFVVYYVIFRFAI. The 82-residue stretch at 449–530 folds into the PTS EIIB type-1 domain; the sequence is GYNVPAILEA…MAGLMHTVQA (82 aa). Cysteine 471 acts as the Phosphocysteine intermediate; for EIIB activity in catalysis.

It is found in the cell inner membrane. It carries out the reaction D-maltose(out) + N(pros)-phospho-L-histidyl-[protein] = alpha-maltose 6'-phosphate(in) + L-histidyl-[protein]. Functionally, the phosphoenolpyruvate-dependent sugar phosphotransferase system (sugar PTS), a major carbohydrate active transport system, catalyzes the phosphorylation of incoming sugar substrates concomitantly with their translocation across the cell membrane. This system is involved in maltose transport. MalX can also recognize and transport glucose even though this sugar may not represent the natural substrate of the system. This is PTS system maltose-specific EIICB component from Escherichia coli (strain K12).